The following is a 265-amino-acid chain: MPRVTTKTVQEMKEEGVPIAALTAYDYTSARLLDRAGADVLLVGDSAANVMAGHETTLPMTLDQMIYHAQCVVRGIDRSLVVVDLPFGAYQGDPTEALDSAIRVMKEAGAHAVKLEGGAPVVEAVERMVTAGIPVMGHLGLTPQSIYDYGTYQVRARDEEEADELRADAKRLEEAGCFAVVLEKIPAELAAEVTASLSIPTIGIGAGDQTDGQVLVSHDALGLSTDFEPRFVRRYARLDETIIDAIGAYVSDVRDRSFPDEDESY.

Positions 45 and 84 each coordinate Mg(2+). Residues 45-46, Asp-84, and Lys-114 each bind 3-methyl-2-oxobutanoate; that span reads DS. Glu-116 provides a ligand contact to Mg(2+). Catalysis depends on Glu-183, which acts as the Proton acceptor.

This sequence belongs to the PanB family. In terms of assembly, homodecamer; pentamer of dimers. Mg(2+) is required as a cofactor.

It localises to the cytoplasm. It catalyses the reaction 3-methyl-2-oxobutanoate + (6R)-5,10-methylene-5,6,7,8-tetrahydrofolate + H2O = 2-dehydropantoate + (6S)-5,6,7,8-tetrahydrofolate. The protein operates within cofactor biosynthesis; (R)-pantothenate biosynthesis; (R)-pantoate from 3-methyl-2-oxobutanoate: step 1/2. Its function is as follows. Catalyzes the reversible reaction in which hydroxymethyl group from 5,10-methylenetetrahydrofolate is transferred onto alpha-ketoisovalerate to form ketopantoate. The sequence is that of 3-methyl-2-oxobutanoate hydroxymethyltransferase from Salinibacter ruber (strain DSM 13855 / M31).